The sequence spans 302 residues: Sulfate adenylyltransferase subunit 2 (302 aa).

The interval 279-302 (ERQGRAIDHDQSGSMELKKRQGYF) is disordered. The span at 280–302 (RQGRAIDHDQSGSMELKKRQGYF) shows a compositional bias: basic and acidic residues.

This sequence belongs to the PAPS reductase family. CysD subfamily. In terms of assembly, heterodimer composed of CysD, the smaller subunit, and CysN.

The catalysed reaction is sulfate + ATP + H(+) = adenosine 5'-phosphosulfate + diphosphate. The protein operates within sulfur metabolism; hydrogen sulfide biosynthesis; sulfite from sulfate: step 1/3. In terms of biological role, with CysN forms the ATP sulfurylase (ATPS) that catalyzes the adenylation of sulfate producing adenosine 5'-phosphosulfate (APS) and diphosphate, the first enzymatic step in sulfur assimilation pathway. APS synthesis involves the formation of a high-energy phosphoric-sulfuric acid anhydride bond driven by GTP hydrolysis by CysN coupled to ATP hydrolysis by CysD. This chain is Sulfate adenylyltransferase subunit 2, found in Photobacterium profundum (strain SS9).